Consider the following 260-residue polypeptide: Pyridoxine 5'-phosphate synthase (260 aa).

N15 serves as a coordination point for 3-amino-2-oxopropyl phosphate. Residue D17–H18 coordinates 1-deoxy-D-xylulose 5-phosphate. R26 contributes to the 3-amino-2-oxopropyl phosphate binding site. The Proton acceptor role is filled by H51. Positions 53 and 58 each coordinate 1-deoxy-D-xylulose 5-phosphate. E78 acts as the Proton acceptor in catalysis. Residue T108 coordinates 1-deoxy-D-xylulose 5-phosphate. The active-site Proton donor is H199. 3-amino-2-oxopropyl phosphate is bound by residues G200 and G221 to H222.

It belongs to the PNP synthase family. Homooctamer; tetramer of dimers.

The protein localises to the cytoplasm. The enzyme catalyses 3-amino-2-oxopropyl phosphate + 1-deoxy-D-xylulose 5-phosphate = pyridoxine 5'-phosphate + phosphate + 2 H2O + H(+). It functions in the pathway cofactor biosynthesis; pyridoxine 5'-phosphate biosynthesis; pyridoxine 5'-phosphate from D-erythrose 4-phosphate: step 5/5. Functionally, catalyzes the complicated ring closure reaction between the two acyclic compounds 1-deoxy-D-xylulose-5-phosphate (DXP) and 3-amino-2-oxopropyl phosphate (1-amino-acetone-3-phosphate or AAP) to form pyridoxine 5'-phosphate (PNP) and inorganic phosphate. The polypeptide is Pyridoxine 5'-phosphate synthase (Cupriavidus taiwanensis (strain DSM 17343 / BCRC 17206 / CCUG 44338 / CIP 107171 / LMG 19424 / R1) (Ralstonia taiwanensis (strain LMG 19424))).